The sequence spans 28 residues: Basic phospholipase A2 homolog BmatTX-II (28 aa).

As to quaternary structure, monomer. In terms of tissue distribution, expressed by the venom gland.

The protein resides in the secreted. Its function is as follows. Snake venom phospholipase A2 homolog that lacks enzymatic activity. Shows high myotoxic activity, neutrophil activation (demonstrated by activation induction of IL-1beta production), and slight cytotoxicity against Jurkat (leukemia T) and SK-BR-3 (breast adenocarcinoma) tumor cell lines. A model of myotoxic mechanism has been proposed: an apo Lys49-PLA2 is activated by the entrance of a hydrophobic molecule (e.g. fatty acid) at the hydrophobic channel of the protein leading to a reorientation of a monomer. This reorientation causes a transition between 'inactive' to 'active' states, causing alignment of C-terminal and membrane-docking sites (MDoS) side-by-side and putting the membrane-disruption sites (MDiS) in the same plane, exposed to solvent and in a symmetric position for both monomers. The MDoS region stabilizes the toxin on membrane by the interaction of charged residues with phospholipid head groups. Subsequently, the MDiS region destabilizes the membrane with penetration of hydrophobic residues. This insertion causes a disorganization of the membrane, allowing an uncontrolled influx of ions (i.e. calcium and sodium), and eventually triggering irreversible intracellular alterations and cell death. The chain is Basic phospholipase A2 homolog BmatTX-II from Bothrops mattogrossensis (Pitviper).